We begin with the raw amino-acid sequence, 719 residues long: T-cell immunomodulatory protein homolog (719 aa).

Residues Met-1 to Ile-32 form the signal peptide. At Phe-33–Tyr-677 the chain is on the extracellular side. N-linked (GlcNAc...) asparagine glycosylation is found at Asn-144, Asn-277, Asn-410, Asn-540, and Asn-659. Residues Ser-678–Leu-697 form a helical membrane-spanning segment. Over Asp-698–Gly-719 the chain is Cytoplasmic.

Belongs to the TIP family.

It is found in the membrane. Functionally, may protect the parasite against attack by the host immune system by immunomodulation. In Plasmodium falciparum (isolate 3D7), this protein is T-cell immunomodulatory protein homolog.